We begin with the raw amino-acid sequence, 172 residues long: MSEAEFHEMRDPRIEKVVVHMGVGEGGRELAKSEDILEEITGQESVRTISGRASQDFGVRQGEPVGAKVTLRGESAVEFLETALPITDLSASSFDETGNFGFGVEEHTEFPSQEYDPQIGIYGLDVTVNIVRPGYRVKKRDKRSRQIPSSHRMTVEDAVAFIESTFDVEVEE.

The protein belongs to the universal ribosomal protein uL5 family. In terms of assembly, part of the 50S ribosomal subunit; contacts the 5S rRNA and probably tRNA. Forms a bridge to the 30S subunit in the 70S ribosome.

This is one of the proteins that bind and probably mediate the attachment of the 5S RNA into the large ribosomal subunit, where it forms part of the central protuberance. In the 70S ribosome it contacts protein S13 of the 30S subunit (bridge B1b), connecting the 2 subunits; this bridge is implicated in subunit movement. May contact the P site tRNA; the 5S rRNA and some of its associated proteins might help stabilize positioning of ribosome-bound tRNAs. This chain is Large ribosomal subunit protein uL5, found in Haloferax mediterranei (strain ATCC 33500 / DSM 1411 / JCM 8866 / NBRC 14739 / NCIMB 2177 / R-4) (Halobacterium mediterranei).